A 222-amino-acid polypeptide reads, in one-letter code: MADS-box transcription factor 26 (222 aa).

One can recognise an MADS-box domain in the interval 1-61 (MARGKVQLRR…GKLYDLATTG (61 aa)). Residues 85 to 176 (RMDPKQEAMV…QEKIVEQNGL (92 aa)) enclose the K-box domain.

It localises to the nucleus. Its function is as follows. Probable transcription factor. This chain is MADS-box transcription factor 26 (MADS26), found in Oryza sativa subsp. indica (Rice).